Consider the following 689-residue polypeptide: Protein asunder (689 aa).

Residues 521 to 550 (NGARLKLSKAKDQYRLLYRELEQLIQLNAT) adopt a coiled-coil conformation. Disordered stretches follow at residues 591–619 (SPER…SKRR) and 669–689 (KDAV…SVRS). Low complexity predominate over residues 599-614 (SSVGASGSSNSNSLLK). The Nuclear localization signal (NLS) motif lies at 613-619 (LKASKRR).

This sequence belongs to the Integrator subunit 13 family. As to quaternary structure, belongs to the multiprotein complex Integrator, at least composed of IntS1, IntS2, IntS3, IntS4, omd/IntS5, IntS6, defl/IntS7, IntS8, IntS9, IntS10, IntS11, IntS12, asun/IntS13, IntS14 and IntS15. The core complex associates with protein phosphatase 2A subunits mts/PP2A and Pp2A-29B, to form the Integrator-PP2A (INTAC) complex. Phosphorylated.

It localises to the nucleus. Its subcellular location is the cytoplasm. It is found in the perinuclear region. Functionally, component of the integrator complex, a multiprotein complex that terminates RNA polymerase II (Pol II) transcription in the promoter-proximal region of genes. The integrator complex provides a quality checkpoint during transcription elongation by driving premature transcription termination of transcripts that are unfavorably configured for transcriptional elongation: the complex terminates transcription by (1) catalyzing dephosphorylation of the C-terminal domain (CTD) of Pol II subunit Polr2A/Rbp1 and Spt5, and (2) degrading the exiting nascent RNA transcript via endonuclease activity. The integrator complex is also involved in the 3'-end processing of the U7 snRNA, and also the spliceosomal snRNAs U1, U2, U4 and U5. The chain is Protein asunder (asun) from Drosophila simulans (Fruit fly).